Here is a 286-residue protein sequence, read N- to C-terminus: Light-independent protochlorophyllide reductase iron-sulfur ATP-binding protein (286 aa).

Residues 10–15 (GIGKST) and K39 contribute to the ATP site. S14 is a binding site for Mg(2+). C95 and C129 together coordinate [4Fe-4S] cluster. 180 to 181 (NR) lines the ATP pocket.

Belongs to the NifH/BchL/ChlL family. Homodimer. Protochlorophyllide reductase is composed of three subunits; ChlL, ChlN and ChlB. It depends on [4Fe-4S] cluster as a cofactor.

It carries out the reaction chlorophyllide a + oxidized 2[4Fe-4S]-[ferredoxin] + 2 ADP + 2 phosphate = protochlorophyllide a + reduced 2[4Fe-4S]-[ferredoxin] + 2 ATP + 2 H2O. It functions in the pathway porphyrin-containing compound metabolism; chlorophyll biosynthesis (light-independent). Functionally, component of the dark-operative protochlorophyllide reductase (DPOR) that uses Mg-ATP and reduced ferredoxin to reduce ring D of protochlorophyllide (Pchlide) to form chlorophyllide a (Chlide). This reaction is light-independent. The L component serves as a unique electron donor to the NB-component of the complex, and binds Mg-ATP. The polypeptide is Light-independent protochlorophyllide reductase iron-sulfur ATP-binding protein (Leptolyngbya boryana (Plectonema boryanum)).